The primary structure comprises 524 residues: Hydroxysteroid dehydrogenase-like protein 2 (524 aa).

NADP(+) is bound by residues 17 to 23 (GASRGIG), Lys-42, and Asp-74. Residue Lys-42 is modified to N6-(2-hydroxyisobutyryl)lysine. N6-acetyllysine is present on Lys-116. Tyr-168 serves as the catalytic Proton acceptor. Position 172 (Lys-172) interacts with NADP(+). Residues 283–300 (EEKESYDPVPEVKEEKLQ) are compositionally biased toward basic and acidic residues. The segment at 283-410 (EEKESYDPVP…PLLQSVLPPK (128 aa)) is disordered. Low complexity predominate over residues 301 to 391 (LQEQPQLQEQ…QQQPQQRPQQ (91 aa)). Positions 414 to 521 (GAVEETFRIV…KLEKLMTHMN (108 aa)) constitute an SCP2 domain. Lys-424 carries the N6-succinyllysine modification.

Belongs to the short-chain dehydrogenases/reductases (SDR) family.

It is found in the peroxisome. It localises to the mitochondrion. In terms of biological role, has apparently no steroid dehydrogenase activity. Controls bile acid (BA) and lipid metabolism in response to nutritional cues. In Rattus norvegicus (Rat), this protein is Hydroxysteroid dehydrogenase-like protein 2 (Hsdl2).